The following is a 131-amino-acid chain: Protein ApaG (131 aa).

Positions 7-131 constitute an ApaG domain; the sequence is PVKPYDLTVS…FLLAMPRTLH (125 aa).

In Bordetella bronchiseptica (strain ATCC BAA-588 / NCTC 13252 / RB50) (Alcaligenes bronchisepticus), this protein is Protein ApaG.